The sequence spans 640 residues: EF-hand domain-containing protein 1 (640 aa).

The segment at 1–45 (MVSNPVHGLPFLPGTSFKDSTKTAFHRSQTLSYRNGYAIVRRPTV) is required for its localization in the mitotic spindle and interaction with alpha-tubulin. 3 DM10 domains span residues 93 to 198 (DKKV…ESQG), 239 to 359 (DKQV…KEKF), and 416 to 520 (DNKV…ESNA). A disordered region spans residues 535-554 (VRKREAPAPEAESKQTEKDP). A compositionally biased stretch (basic and acidic residues) spans 538–554 (REAPAPEAESKQTEKDP). The region spanning 574–609 (SCKDNIREAFQIYDKEASGYVDRDMFFKICESLNVP) is the EF-hand domain.

As to quaternary structure, microtubule inner protein component of sperm flagellar doublet microtubules. Interacts with the C-terminus of CACNA1E. Interacts with alpha-tubulin. As to expression, widely expressed. Not detected in lymphocytes.

The protein resides in the cytoplasm. It is found in the cytoskeleton. It localises to the cilium axoneme. Its subcellular location is the flagellum axoneme. The protein localises to the microtubule organizing center. The protein resides in the centrosome. It is found in the spindle. It localises to the spindle pole. Functionally, microtubule inner protein (MIP) part of the dynein-decorated doublet microtubules (DMTs) in cilia axoneme, which is required for motile cilia beating. Microtubule-associated protein which regulates cell division and neuronal migration during cortical development. Necessary for radial and tangential cell migration during brain development, possibly acting as a regulator of cell morphology and process formation during migration. May enhance calcium influx through CACNA1E and stimulate programmed cell death. This is EF-hand domain-containing protein 1 from Homo sapiens (Human).